The following is a 728-amino-acid chain: MAQPPDAAAAAAVPPPVVIDRDVWHACAVPYSGVLPGVGTLVYYIPHGHIEQCAEDPALLLSRLPDPIHPVPCTVADLVLDVDAESGEAYATISLLPGSHDDTTARRQVPAHGEPGFRFFEKQLSPADVTSNALVLPAGAEHVLPPLDIAAYQTARLFDVRDLRGKRFEFVHIWDKKRCRYMLGDLGVNDNDGWRGFVKAKRLATRDTVVFMRRGGGDGDGDGELLVGVRRAPRARGGHHPRPGVEDNKVVSEVWLAMQGVTPFEVTYYPREGTFEFVVSRDEYIGFSFSPFYPFVPGTTVHLRMNPLQIAQSISGTVRTFDHLRPWRMLEVDWDQAASPISYRIHRQVNSWQVLRQPQPAATTSAVRIRDAIVATPQVQIMALPRPPPPTTTTGMVPSDDSYAMISLFPGDCYVTHRPLPAARDPVGGQREFCFFDKKLSPSDAAANGGGSGALFVIPKPSAAEHVLPRIPDLRVTNLQGGRWEFGHTWSDADTDRRSSSHTLAAGWSAFVKAKRLCVGDTVIFMRRRPGGEPLVGVRRKPHGGMPVGIPDKHVADAWLDASSAQPFRVTYCPWQGTAEFVVRREEVEGSPPLAPGTRVRLLMNPDDARRRSQPPVYGTVRDVHCRSEWRMLEVDWDRDSPLAPTMNRRVNSWQVQPVQLALPPQGSDEEAAAATTSTAHAGDATTSAPSLALQLQTMASSSSSSAPIIPSRGSAFRIVNPRDGSQG.

A DNA-binding region (TF-B3 1) is located at residues 119–233 (FFEKQLSPAD…ELLVGVRRAP (115 aa)). Low complexity-rich tracts occupy residues 665-689 (PQGS…TTSA) and 700-712 (ASSS…IIPS). Residues 665-728 (PQGSDEEAAA…IVNPRDGSQG (64 aa)) form a disordered region.

It belongs to the ARF family. Homo and heterodimers.

It is found in the nucleus. Its function is as follows. Auxin response factors (ARFs) are transcriptional factors that bind specifically to the DNA sequence 5'-TGTCTC-3' found in the auxin-responsive promoter elements (AuxREs). This Oryza sativa subsp. japonica (Rice) protein is Putative auxin response factor 20 (ARF20).